The primary structure comprises 501 residues: Aspartyl/glutamyl-tRNA(Asn/Gln) amidotransferase subunit B (501 aa).

Positions 271-299 are disordered; sequence VQETRHYQETDGSTSKGRPKETAEDYRYF. A compositionally biased stretch (basic and acidic residues) spans 288 to 299; that stretch reads RPKETAEDYRYF.

It belongs to the GatB/GatE family. GatB subfamily. Heterotrimer of A, B and C subunits.

The enzyme catalyses L-glutamyl-tRNA(Gln) + L-glutamine + ATP + H2O = L-glutaminyl-tRNA(Gln) + L-glutamate + ADP + phosphate + H(+). It catalyses the reaction L-aspartyl-tRNA(Asn) + L-glutamine + ATP + H2O = L-asparaginyl-tRNA(Asn) + L-glutamate + ADP + phosphate + 2 H(+). Its function is as follows. Allows the formation of correctly charged Asn-tRNA(Asn) or Gln-tRNA(Gln) through the transamidation of misacylated Asp-tRNA(Asn) or Glu-tRNA(Gln) in organisms which lack either or both of asparaginyl-tRNA or glutaminyl-tRNA synthetases. The reaction takes place in the presence of glutamine and ATP through an activated phospho-Asp-tRNA(Asn) or phospho-Glu-tRNA(Gln). The protein is Aspartyl/glutamyl-tRNA(Asn/Gln) amidotransferase subunit B of Corynebacterium diphtheriae (strain ATCC 700971 / NCTC 13129 / Biotype gravis).